Consider the following 364-residue polypeptide: UDP-N-acetylglucosamine--N-acetylmuramyl-(pentapeptide) pyrophosphoryl-undecaprenol N-acetylglucosamine transferase 1 (364 aa).

Residues 10-12 (TGG), asparagine 124, serine 195, isoleucine 250, and glutamine 295 contribute to the UDP-N-acetyl-alpha-D-glucosamine site.

Belongs to the glycosyltransferase 28 family. MurG subfamily.

It localises to the cell membrane. The enzyme catalyses di-trans,octa-cis-undecaprenyl diphospho-N-acetyl-alpha-D-muramoyl-L-alanyl-D-glutamyl-meso-2,6-diaminopimeloyl-D-alanyl-D-alanine + UDP-N-acetyl-alpha-D-glucosamine = di-trans,octa-cis-undecaprenyl diphospho-[N-acetyl-alpha-D-glucosaminyl-(1-&gt;4)]-N-acetyl-alpha-D-muramoyl-L-alanyl-D-glutamyl-meso-2,6-diaminopimeloyl-D-alanyl-D-alanine + UDP + H(+). It functions in the pathway cell wall biogenesis; peptidoglycan biosynthesis. Cell wall formation. Catalyzes the transfer of a GlcNAc subunit on undecaprenyl-pyrophosphoryl-MurNAc-pentapeptide (lipid intermediate I) to form undecaprenyl-pyrophosphoryl-MurNAc-(pentapeptide)GlcNAc (lipid intermediate II). The chain is UDP-N-acetylglucosamine--N-acetylmuramyl-(pentapeptide) pyrophosphoryl-undecaprenol N-acetylglucosamine transferase 1 from Bacillus thuringiensis subsp. konkukian (strain 97-27).